The primary structure comprises 273 residues: 2,3,4,5-tetrahydropyridine-2,6-dicarboxylate N-succinyltransferase (273 aa).

Positions 104 and 141 each coordinate substrate.

Belongs to the transferase hexapeptide repeat family. In terms of assembly, homotrimer.

The protein localises to the cytoplasm. It catalyses the reaction (S)-2,3,4,5-tetrahydrodipicolinate + succinyl-CoA + H2O = (S)-2-succinylamino-6-oxoheptanedioate + CoA. It participates in amino-acid biosynthesis; L-lysine biosynthesis via DAP pathway; LL-2,6-diaminopimelate from (S)-tetrahydrodipicolinate (succinylase route): step 1/3. The protein is 2,3,4,5-tetrahydropyridine-2,6-dicarboxylate N-succinyltransferase of Nitrosococcus oceani (strain ATCC 19707 / BCRC 17464 / JCM 30415 / NCIMB 11848 / C-107).